Reading from the N-terminus, the 99-residue chain is UPF0125 protein BU253 (99 aa).

This sequence belongs to the UPF0125 (RnfH) family.

This Buchnera aphidicola subsp. Acyrthosiphon pisum (strain APS) (Acyrthosiphon pisum symbiotic bacterium) protein is UPF0125 protein BU253.